Reading from the N-terminus, the 386-residue chain is ADP,ATP carrier protein, mitochondrial (386 aa).

Residues 1–76 (ADNQHPTVYQ…ANASPVFVQA (76 aa)) constitute a mitochondrion transit peptide. Solcar repeat units follow at residues 83–176 (AAFA…FKRL), 188–281 (KWFA…LKPV), and 289–375 (DSFF…LQVI). A run of 5 helical transmembrane segments spans residues 85 to 112 (FATDFLMGGVSAAVSKTAAAPIERVKLL), 153 to 177 (TANVIRYFPTQALNFAFKDYFKRLF), 186 to 206 (YWKWFAGNLASGGGAGASSLL), 257 to 278 (FNISCVGIIVYRGLYFGMYDSL), and 292 to 312 (FASFALGWLITNGAGLASYPI). Residues Arg-158 and Lys-170 each coordinate ADP. Arg-316 provides a ligand contact to ADP. The segment at 316–321 (RRRMMM) is important for transport activity. Positions 316-321 (RRRMMM) match the Nucleotide carrier signature motif motif. A helical membrane pass occupies residues 352-372 (AGANVLRAVAGAGVLAGYDKL).

The protein belongs to the mitochondrial carrier (TC 2.A.29) family. Monomer.

Its subcellular location is the mitochondrion inner membrane. It catalyses the reaction ADP(in) + ATP(out) = ADP(out) + ATP(in). With respect to regulation, the matrix-open state (m-state) is inhibited by the membrane-permeable bongkrekic acid (BKA). The cytoplasmic-open state (c-state) is inhibited by the membrane-impermeable toxic inhibitor carboxyatractyloside (CATR). Its function is as follows. ADP:ATP antiporter that mediates import of ADP into the mitochondrial matrix for ATP synthesis, and export of ATP out to fuel the cell. Cycles between the cytoplasmic-open state (c-state) and the matrix-open state (m-state): operates by the alternating access mechanism with a single substrate-binding site intermittently exposed to either the cytosolic (c-state) or matrix (m-state) side of the inner mitochondrial membrane. The chain is ADP,ATP carrier protein, mitochondrial (ANT1) from Solanum tuberosum (Potato).